Consider the following 196-residue polypeptide: Imidazoleglycerol-phosphate dehydratase (196 aa).

It belongs to the imidazoleglycerol-phosphate dehydratase family.

It is found in the cytoplasm. It carries out the reaction D-erythro-1-(imidazol-4-yl)glycerol 3-phosphate = 3-(imidazol-4-yl)-2-oxopropyl phosphate + H2O. It functions in the pathway amino-acid biosynthesis; L-histidine biosynthesis; L-histidine from 5-phospho-alpha-D-ribose 1-diphosphate: step 6/9. This Caulobacter vibrioides (strain ATCC 19089 / CIP 103742 / CB 15) (Caulobacter crescentus) protein is Imidazoleglycerol-phosphate dehydratase.